Reading from the N-terminus, the 34-residue chain is Photosystem II reaction center protein M (34 aa).

Residues 5 to 25 (ILGLIATALFIIIPTSFLLIL) form a helical membrane-spanning segment.

Belongs to the PsbM family. In terms of assembly, PSII is composed of 1 copy each of membrane proteins PsbA, PsbB, PsbC, PsbD, PsbE, PsbF, PsbH, PsbI, PsbJ, PsbK, PsbL, PsbM, PsbT, PsbX, PsbY, PsbZ, Psb30/Ycf12, at least 3 peripheral proteins of the oxygen-evolving complex and a large number of cofactors. It forms dimeric complexes.

Its subcellular location is the plastid. The protein localises to the chloroplast thylakoid membrane. Functionally, one of the components of the core complex of photosystem II (PSII). PSII is a light-driven water:plastoquinone oxidoreductase that uses light energy to abstract electrons from H(2)O, generating O(2) and a proton gradient subsequently used for ATP formation. It consists of a core antenna complex that captures photons, and an electron transfer chain that converts photonic excitation into a charge separation. This subunit is found at the monomer-monomer interface. In Nephroselmis olivacea (Green alga), this protein is Photosystem II reaction center protein M.